Here is a 64-residue protein sequence, read N- to C-terminus: Phi-buthitoxin-Hj1a (64 aa).

Positions 1–18 are cleaved as a signal peptide; the sequence is MNSFVVVLLLFIAILCNA. Disulfide bonds link C29–C43, C36–C49, and C42–C58.

This sequence belongs to the scorpion calcin-like family. Expressed by the venom gland.

It localises to the secreted. Functionally, may increase intracellular calcium release through the activation of nuclear inositol 1,4,5-trisphosphate receptors (ITPR) of cardiomyocytes, thereby causing an increase in the contraction frequency of these cells. In Hottentotta judaicus (Black scorpion), this protein is Phi-buthitoxin-Hj1a.